Consider the following 253-residue polypeptide: Isopentenyl-diphosphate delta-isomerase IDI1 (253 aa).

Substrate is bound at residue lysine 61. Mg(2+) contacts are provided by histidine 65 and histidine 76. The Nudix hydrolase domain maps to 74-224 (LLHRAFSVFL…SLVFTPWFKL (151 aa)). Residues glutamine 94 and lysine 99 each contribute to the substrate site. Cysteine 111 is an active-site residue. Residue serine 112 participates in substrate binding. Residues 112–145 (SHPLHIPTETGSTLEDSIAGVKRAAQRKLEHELG) carry the Nudix box motif. 2 residues coordinate Mg(2+): glutamate 174 and glutamate 176. The active site involves glutamate 176.

Belongs to the IPP isomerase type 1 family. Mg(2+) is required as a cofactor.

It carries out the reaction isopentenyl diphosphate = dimethylallyl diphosphate. It functions in the pathway isoprenoid biosynthesis; dimethylallyl diphosphate biosynthesis; dimethylallyl diphosphate from isopentenyl diphosphate: step 1/1. In terms of biological role, isopentenyl-diphosphate delta-isomerase; part of the second module of ergosterol biosynthesis pathway that includes the middle steps of the pathway. IDI1 catalyzes the 1,3-allylic rearrangement of isopentenyl (IPP) to its highly electrophilic allylic isomer, dimethylallyl diphosphate (DMAPP). The second module is carried out in the vacuole and involves the formation of farnesyl diphosphate, which is also an important intermediate in the biosynthesis of ubiquinone, dolichol, heme and prenylated proteins. Activity by the mevalonate kinase ERG12 (FG05912) first converts mevalonate into 5-phosphomevalonate. 5-phosphomevalonate is then further converted to 5-diphosphomevalonate by the phosphomevalonate kinase ERG8 (FG09764). The diphosphomevalonate decarboxylase ERG19 (FG10424) then produces isopentenyl diphosphate. The isopentenyl-diphosphate delta-isomerase IDI1 (FG09722) then catalyzes the 1,3-allylic rearrangement of the homoallylic substrate isopentenyl (IPP) to its highly electrophilic allylic isomer, dimethylallyl diphosphate (DMAPP). Finally the farnesyl diphosphate synthase ERG20 (FG06784) catalyzes the sequential condensation of isopentenyl pyrophosphate with dimethylallyl pyrophosphate, and then with the resultant geranylpyrophosphate to the ultimate product farnesyl pyrophosphate. The protein is Isopentenyl-diphosphate delta-isomerase IDI1 of Gibberella zeae (strain ATCC MYA-4620 / CBS 123657 / FGSC 9075 / NRRL 31084 / PH-1) (Wheat head blight fungus).